A 206-amino-acid polypeptide reads, in one-letter code: Thymidylate kinase (206 aa).

11–18 (GIDGAGKT) serves as a coordination point for ATP.

It belongs to the thymidylate kinase family.

It catalyses the reaction dTMP + ATP = dTDP + ADP. Phosphorylation of dTMP to form dTDP in both de novo and salvage pathways of dTTP synthesis. The polypeptide is Thymidylate kinase (Burkholderia mallei (strain NCTC 10247)).